A 509-amino-acid chain; its full sequence is Maturase K (509 aa).

It belongs to the intron maturase 2 family. MatK subfamily.

It is found in the plastid. The protein localises to the chloroplast. In terms of biological role, usually encoded in the trnK tRNA gene intron. Probably assists in splicing its own and other chloroplast group II introns. The chain is Maturase K from Sequoia sempervirens (California redwood).